Consider the following 347-residue polypeptide: NADH-ubiquinone oxidoreductase chain 2 (347 aa).

Helical transmembrane passes span 3–23 (PLIFTMILLTVMLGTAIVMTT), 25–45 (HWVMAWIGFEMNMLAIIPILM), 59–79 (YFLTQATASMLLMLAIVINLT), 96–116 (IIMTLAMAMKLGLAPFHFWVP), 122–142 (VQLSSGLILLTWQKLAPMSIL), 149–169 (INLDLLLLMSILSILVGGWGG), 178–198 (ILAYSSIAHMGWMTAIMVYNP), 201–221 (ALLNLAIYILLTTTTFVMLMV), 237–257 (MPLLTTAILTIMLSLGGLPPL), 274–294 (DSMITPTIMAVMTLLNLYFYM), and 326–346 (LSPLIILSTLILPLSPMLALL).

It belongs to the complex I subunit 2 family. In terms of assembly, core subunit of respiratory chain NADH dehydrogenase (Complex I) which is composed of 45 different subunits. Interacts with TMEM242.

The protein localises to the mitochondrion inner membrane. It carries out the reaction a ubiquinone + NADH + 5 H(+)(in) = a ubiquinol + NAD(+) + 4 H(+)(out). Functionally, core subunit of the mitochondrial membrane respiratory chain NADH dehydrogenase (Complex I) which catalyzes electron transfer from NADH through the respiratory chain, using ubiquinone as an electron acceptor. Essential for the catalytic activity and assembly of complex I. The chain is NADH-ubiquinone oxidoreductase chain 2 from Nyctimene aello (Broad-striped tube-nosed fruit bat).